A 727-amino-acid chain; its full sequence is Glycerol-3-phosphate dehydrogenase, mitochondrial (727 aa).

The N-terminal 42 residues, Met-1–Ala-42, are a transit peptide targeting the mitochondrion. Asp-71–Glu-99 is an FAD binding site. Phosphotyrosine is present on Tyr-601. EF-hand domains lie at Ser-623–Gln-658 and Met-659–Gly-694. The Ca(2+) site is built by Asp-672, Asn-674, Asn-676, Gln-678, and Glu-683.

It belongs to the FAD-dependent glycerol-3-phosphate dehydrogenase family. FAD is required as a cofactor.

It localises to the mitochondrion inner membrane. It carries out the reaction a quinone + sn-glycerol 3-phosphate = dihydroxyacetone phosphate + a quinol. The protein operates within polyol metabolism; glycerol degradation via glycerol kinase pathway; glycerone phosphate from sn-glycerol 3-phosphate (anaerobic route): step 1/1. With respect to regulation, calcium-binding enhance the activity of the enzyme. Functionally, calcium-responsive mitochondrial glycerol-3-phosphate dehydrogenase which seems to be a key component of the pancreatic beta-cell glucose-sensing device. The sequence is that of Glycerol-3-phosphate dehydrogenase, mitochondrial from Mus musculus (Mouse).